A 150-amino-acid polypeptide reads, in one-letter code: Endoribonuclease YbeY (150 aa).

Residues His-113, His-117, and His-123 each contribute to the Zn(2+) site.

The protein belongs to the endoribonuclease YbeY family. Requires Zn(2+) as cofactor.

The protein resides in the cytoplasm. Its function is as follows. Single strand-specific metallo-endoribonuclease involved in late-stage 70S ribosome quality control and in maturation of the 3' terminus of the 16S rRNA. The polypeptide is Endoribonuclease YbeY (Wolbachia sp. subsp. Drosophila simulans (strain wRi)).